Reading from the N-terminus, the 447-residue chain is 3-phosphoshikimate 1-carboxyvinyltransferase (447 aa).

The segment at 1 to 22 (MTPSLKRLSGAMRARPAPALSG) is disordered. 3-phosphoshikimate-binding residues include Lys30, Ser31, and Arg35. Lys30 lines the phosphoenolpyruvate pocket. Phosphoenolpyruvate is bound by residues Gly102 and Arg130. Residues Ser173, Gln175, Asp325, and Lys352 each coordinate 3-phosphoshikimate. Phosphoenolpyruvate is bound at residue Gln175. Catalysis depends on Asp325, which acts as the Proton acceptor. Phosphoenolpyruvate contacts are provided by Arg356 and Arg401.

Belongs to the EPSP synthase family. In terms of assembly, monomer.

It is found in the cytoplasm. The catalysed reaction is 3-phosphoshikimate + phosphoenolpyruvate = 5-O-(1-carboxyvinyl)-3-phosphoshikimate + phosphate. It functions in the pathway metabolic intermediate biosynthesis; chorismate biosynthesis; chorismate from D-erythrose 4-phosphate and phosphoenolpyruvate: step 6/7. Functionally, catalyzes the transfer of the enolpyruvyl moiety of phosphoenolpyruvate (PEP) to the 5-hydroxyl of shikimate-3-phosphate (S3P) to produce enolpyruvyl shikimate-3-phosphate and inorganic phosphate. The chain is 3-phosphoshikimate 1-carboxyvinyltransferase from Maricaulis maris (strain MCS10) (Caulobacter maris).